We begin with the raw amino-acid sequence, 160 residues long: uncharacterized protein (160 aa).

A helical membrane pass occupies residues 1 to 21 (MSIQTLIIISIVIFILWLTFT).

The protein belongs to the IIV-6 203L/325L family.

It localises to the membrane. This is an uncharacterized protein from Invertebrate iridescent virus 6 (IIV-6).